A 68-amino-acid chain; its full sequence is Large ribosomal subunit protein uL29 (68 aa).

The protein belongs to the universal ribosomal protein uL29 family.

This Maricaulis maris (strain MCS10) (Caulobacter maris) protein is Large ribosomal subunit protein uL29.